Reading from the N-terminus, the 475-residue chain is Ataxin-10 (475 aa).

Omega-N-methylarginine is present on R10. S12 and S77 each carry phosphoserine. T82 is subject to Phosphothreonine. At S430 the chain carries Phosphoserine.

This sequence belongs to the ataxin-10 family. As to quaternary structure, homooligomer. Interacts with GNB2. Interacts with IQCB1. Interacts with OGT. In terms of processing, polyubiquitinated. Post-translationally, phosphorylation at Ser-12 by AURKB promotes the association of ATXN10 with PLK1. Phosphorylation at Ser-77 and Thr-82 by PLK1 may play a role in the regulation of cytokinesis and may stimulate the proteasome-mediated degradation of ATXN10.

The protein localises to the cytoplasm. The protein resides in the perinuclear region. It localises to the cytoskeleton. Its subcellular location is the cilium basal body. It is found in the microtubule organizing center. The protein localises to the centrosome. The protein resides in the centriole. It localises to the midbody. May play a role in the regulation of cytokinesis. May play a role in signaling by stimulating protein glycosylation. Induces neuritogenesis by activating the Ras-MAP kinase pathway and is necessary for the survival of cerebellar neurons. Does not appear to play a major role in ciliogenesis. This Bos taurus (Bovine) protein is Ataxin-10 (ATXN10).